A 161-amino-acid polypeptide reads, in one-letter code: Vitamin K-dependent protein C (161 aa).

The 161-residue stretch at 1 to 161 folds into the Peptidase S1 domain; sequence EKWELDLDIE…GCGLLHNYGV (161 aa). Residue Asn-17 is glycosylated (N-linked (GlcNAc...) asparagine). Residue Asp-26 is the Charge relay system of the active site. The N-linked (GlcNAc...) asparagine glycan is linked to Asn-82. 2 disulfides stabilise this stretch: Cys-100/Cys-114 and Cys-125/Cys-153. The active-site Charge relay system is Ser-129.

It belongs to the peptidase S1 family. In terms of tissue distribution, plasma; synthesized in the liver.

The protein localises to the secreted. Its subcellular location is the golgi apparatus. It localises to the endoplasmic reticulum. The enzyme catalyses Degradation of blood coagulation factors Va and VIIIa.. Its function is as follows. Protein C is a vitamin K-dependent serine protease that regulates blood coagulation by inactivating factors Va and VIIIa in the presence of calcium ions and phospholipids. Exerts a protective effect on the endothelial cell barrier function. The chain is Vitamin K-dependent protein C (PROC) from Macaca mulatta (Rhesus macaque).